The primary structure comprises 202 residues: NADH-quinone oxidoreductase subunit C (202 aa).

It belongs to the complex I 30 kDa subunit family. As to quaternary structure, NDH-1 is composed of 14 different subunits. Subunits NuoB, C, D, E, F, and G constitute the peripheral sector of the complex.

Its subcellular location is the cell inner membrane. The catalysed reaction is a quinone + NADH + 5 H(+)(in) = a quinol + NAD(+) + 4 H(+)(out). Its function is as follows. NDH-1 shuttles electrons from NADH, via FMN and iron-sulfur (Fe-S) centers, to quinones in the respiratory chain. The immediate electron acceptor for the enzyme in this species is believed to be ubiquinone. Couples the redox reaction to proton translocation (for every two electrons transferred, four hydrogen ions are translocated across the cytoplasmic membrane), and thus conserves the redox energy in a proton gradient. The sequence is that of NADH-quinone oxidoreductase subunit C from Brucella canis (strain ATCC 23365 / NCTC 10854 / RM-666).